Reading from the N-terminus, the 438-residue chain is MPAIVIIGAQWGDEGKGKATDLLGSRIDYVVKFNGGNNAGHTVVVGDEKYALHLLPSGILTGGVTPVIANGVVVDLDVLFQELDGLIARGVDVSRLKISSNAHVITHYHRTIDKVTERFLGKRQIGTTGRGIGPTYADKINRVGIRIQDLFDENILRQKVEGALDQKNHLLVKVYNRRAIGLDEIVDDLLSYAERLRPMVVDSSLLLHQALEDGKYVLFEGGQATMLDVDHGTYPFVTSSSSTSGGAATGSGIGPNRIDRVIGIVKAYTTRVGSGPFPTELFDEWGEFLRERGFEFGTTTGRPRRTGWYDAPIARYTARVNGVTDFVLTKLDTLTGIERIPVCVAYDVDGVRHDEVPASQSDFHHAKPIYEEFPGWTEDISGARRFEDLPKNAQDYTHALERMSGARISAIGVGPARDEIVVRHDLVGEAPSPADASR.

GTP is bound by residues 12 to 18 (GDEGKGK) and 40 to 42 (GHT). Catalysis depends on D13, which acts as the Proton acceptor. Mg(2+) is bound by residues D13 and G40. IMP contacts are provided by residues 13-16 (DEGK), 38-41 (NAGH), T128, R142, Q223, T238, and R302. H41 functions as the Proton donor in the catalytic mechanism. 298 to 304 (TTTGRPR) is a substrate binding site. GTP contacts are provided by residues R304, 330–332 (KLD), and 412–414 (GVG).

The protein belongs to the adenylosuccinate synthetase family. In terms of assembly, homodimer. The cofactor is Mg(2+).

Its subcellular location is the cytoplasm. The enzyme catalyses IMP + L-aspartate + GTP = N(6)-(1,2-dicarboxyethyl)-AMP + GDP + phosphate + 2 H(+). It functions in the pathway purine metabolism; AMP biosynthesis via de novo pathway; AMP from IMP: step 1/2. In terms of biological role, plays an important role in the de novo pathway of purine nucleotide biosynthesis. Catalyzes the first committed step in the biosynthesis of AMP from IMP. The protein is Adenylosuccinate synthetase of Leifsonia xyli subsp. xyli (strain CTCB07).